Here is a 160-residue protein sequence, read N- to C-terminus: Transcription antitermination protein NusB (160 aa).

It belongs to the NusB family.

Its function is as follows. Involved in transcription antitermination. Required for transcription of ribosomal RNA (rRNA) genes. Binds specifically to the boxA antiterminator sequence of the ribosomal RNA (rrn) operons. The protein is Transcription antitermination protein NusB of Rhizobium etli (strain CIAT 652).